We begin with the raw amino-acid sequence, 137 residues long: NTF2-related export protein (137 aa).

In terms of domain architecture, NTF2 spans Glu19 to Tyr135.

Preferentially binds Ran-GTP.

The protein localises to the nucleus. In terms of biological role, stimulator of protein export for NES-containing proteins. Also plays a role in the nuclear export of U1 snRNA, tRNA, and mRNA. The sequence is that of NTF2-related export protein (nxt-1) from Caenorhabditis elegans.